Reading from the N-terminus, the 377-residue chain is MYVRRLELVDFRSYERVGVDLEPGANVLVGPNGVGKTNLIEALGYVATLDSHRVATDAPLVRMGAAAGIIRCAVVHEGRELLVELEIVPGRANRARLGRSPARRARDVLGALRLVLFAPEDLELVRGDPAQRRRYLDDLLVLRQPRYAGVRTDYERVVRQRNALLRTAYLARKTGGTRGGDLSTLAVWDDHLARHGAELLAGRLDLVAALAPHVNRAYDAVAAGAGAAGIAYRSSVELASSTADRADLTAALSDALAAGRTAEIERGTTLVGPHRDELTLTLGPLPAKGYASHGESWSFALALRLAGYDLLRADGIEPVLVLDDVFAELDTGRRDRLAELVGDASQLLVTCAVEEDLPARLRGARFVVREGEVQRVG.

An ATP-binding site is contributed by 30–37 (GPNGVGKT).

The protein belongs to the RecF family.

It is found in the cytoplasm. In terms of biological role, the RecF protein is involved in DNA metabolism; it is required for DNA replication and normal SOS inducibility. RecF binds preferentially to single-stranded, linear DNA. It also seems to bind ATP. In Salinispora tropica (strain ATCC BAA-916 / DSM 44818 / JCM 13857 / NBRC 105044 / CNB-440), this protein is DNA replication and repair protein RecF.